A 262-amino-acid polypeptide reads, in one-letter code: Homeobox-leucine zipper protein HOX24 (262 aa).

Disordered regions lie at residues 44-68 and 162-189; these read AAGR…RKRR and LNER…NSVM. A compositionally biased stretch (gly residues) spans 46–62; sequence GRGGGDGDGGGGGGGGG. The segment at residues 61 to 122 is a DNA-binding region (homeobox); sequence GGGERKRRFT…NKRARWRSKQ (62 aa). The leucine-zipper stretch occupies residues 121–165; sequence KQIEHDYAALRAQYDALHARVESLRQEKLALAAQVDELRGKLNER.

It belongs to the HD-ZIP homeobox family. Class I subfamily. Expressed in roots and panicles.

Its subcellular location is the nucleus. Its function is as follows. Probable transcription factor. In Oryza sativa subsp. indica (Rice), this protein is Homeobox-leucine zipper protein HOX24 (HOX24).